A 146-amino-acid chain; its full sequence is Vascular endothelial growth factor isoform GtVF (146 aa).

Positions 1–24 (MAAYLLAVAILFCIQGWPSGTVQG) are cleaved as a signal peptide. Gln-25 is subject to Pyrrolidone carboxylic acid. 3 disulfides stabilise this stretch: Cys-38/Cys-80, Cys-69/Cys-115, and Cys-73/Cys-117. The interval 116–146 (ECRPRSRSGVDSGKRKRNPEEGEPRAKFPFV) is disordered. The segment covering 133 to 146 (NPEEGEPRAKFPFV) has biased composition (basic and acidic residues).

Belongs to the PDGF/VEGF growth factor family. Snake venom VEGF subfamily. Homodimer; disulfide-linked. As to expression, expressed by the venom gland.

It is found in the secreted. Snake venom VEGFs that may contribute to venom dispersion and prey subjugation by inducing vascular permeability and hypotension. This protein induces an increase in capillary permeability after intradermal injection, in a VEGFR-2 (KDR) dependent manner. In addition, it provokes a drastic hypotensive effect after intravenous injection. The hypotension is mediated by nitric oxide (NO), which is produced by VEGF-activated endothelium NO synthase. Also induces angiogenesis in vitro. Unlike other crotalid VEGFs, this protein probably interacts with VEGF receptor-2 (KDR). This chain is Vascular endothelial growth factor isoform GtVF, found in Gloydius tsushimaensis (Tsushima Island pitviper).